The sequence spans 537 residues: Phosphoenolpyruvate carboxykinase (ATP) (537 aa).

Residues R61, Y195, and K201 each contribute to the substrate site. ATP is bound by residues K201, H220, and 236 to 244; that span reads GLSGTGKTT. The Mn(2+) site is built by K201 and H220. D257 serves as a coordination point for Mn(2+). E285 is an ATP binding site. The segment covering 311–321 has biased composition (basic and acidic residues); that stretch reads PDFDNGSKTEN. The disordered stretch occupies residues 311 to 342; sequence PDFDNGSKTENTRSAYPLESIPNASPTGRAGQ. R323 serves as a coordination point for substrate. ATP-binding residues include R323 and T448.

It belongs to the phosphoenolpyruvate carboxykinase (ATP) family. Mn(2+) serves as cofactor.

It is found in the cytoplasm. The enzyme catalyses oxaloacetate + ATP = phosphoenolpyruvate + ADP + CO2. The protein operates within carbohydrate biosynthesis; gluconeogenesis. In terms of biological role, involved in the gluconeogenesis. Catalyzes the conversion of oxaloacetate (OAA) to phosphoenolpyruvate (PEP) through direct phosphoryl transfer between the nucleoside triphosphate and OAA. The protein is Phosphoenolpyruvate carboxykinase (ATP) of Rhodopseudomonas palustris (strain BisB5).